We begin with the raw amino-acid sequence, 372 residues long: Spermidine/putrescine import ATP-binding protein PotA (372 aa).

Residues 11 to 241 (IELRSIKKSY…PANLFVARFI (231 aa)) form the ABC transporter domain. 43-50 (GPSGCGKT) provides a ligand contact to ATP.

It belongs to the ABC transporter superfamily. Spermidine/putrescine importer (TC 3.A.1.11.1) family. The complex is composed of two ATP-binding proteins (PotA), two transmembrane proteins (PotB and PotC) and a solute-binding protein (PotD).

The protein localises to the cell inner membrane. The enzyme catalyses ATP + H2O + polyamine-[polyamine-binding protein]Side 1 = ADP + phosphate + polyamineSide 2 + [polyamine-binding protein]Side 1.. Its function is as follows. Part of the ABC transporter complex PotABCD involved in spermidine/putrescine import. Responsible for energy coupling to the transport system. The chain is Spermidine/putrescine import ATP-binding protein PotA from Haemophilus influenzae (strain ATCC 51907 / DSM 11121 / KW20 / Rd).